The primary structure comprises 118 residues: Large ribosomal subunit protein bL20 (118 aa).

It belongs to the bacterial ribosomal protein bL20 family.

Binds directly to 23S ribosomal RNA and is necessary for the in vitro assembly process of the 50S ribosomal subunit. It is not involved in the protein synthesizing functions of that subunit. This Sulfurovum sp. (strain NBC37-1) protein is Large ribosomal subunit protein bL20.